Here is a 439-residue protein sequence, read N- to C-terminus: Enolase 1 (439 aa).

Substrate-binding residues include His-160 and Glu-169. Residue Glu-212 is the Proton donor of the active site. Mg(2+) is bound by residues Asp-247, Glu-296, and Asp-323. Substrate is bound by residues Glu-296 and Asp-323. The active-site Proton acceptor is the Lys-348. Substrate-binding positions include 375-378 (SHRS) and Lys-399.

Belongs to the enolase family. As to quaternary structure, homodimer. The cofactor is Mg(2+).

It localises to the cytoplasm. It carries out the reaction (2R)-2-phosphoglycerate = phosphoenolpyruvate + H2O. Its pathway is carbohydrate degradation; glycolysis; pyruvate from D-glyceraldehyde 3-phosphate: step 4/5. The sequence is that of Enolase 1 (ENO1) from Debaryomyces hansenii (strain ATCC 36239 / CBS 767 / BCRC 21394 / JCM 1990 / NBRC 0083 / IGC 2968) (Yeast).